The following is a 305-amino-acid chain: HPr kinase/phosphorylase (305 aa).

Residues His-136 and Lys-157 contribute to the active site. Residue 151-158 (GESGIGKS) participates in ATP binding. A Mg(2+)-binding site is contributed by Ser-158. The Proton acceptor; for phosphorylation activity. Proton donor; for dephosphorylation activity role is filled by Asp-175. Residues 198–207 (LEVRGLGIID) are important for the catalytic mechanism of both phosphorylation and dephosphorylation. Residue Glu-199 participates in Mg(2+) binding. Arg-240 is a catalytic residue. The interval 261–266 (PIRPGR) is important for the catalytic mechanism of dephosphorylation.

It belongs to the HPrK/P family. As to quaternary structure, homohexamer. Requires Mg(2+) as cofactor.

The catalysed reaction is [HPr protein]-L-serine + ATP = [HPr protein]-O-phospho-L-serine + ADP + H(+). It carries out the reaction [HPr protein]-O-phospho-L-serine + phosphate + H(+) = [HPr protein]-L-serine + diphosphate. Functionally, catalyzes the ATP- as well as the pyrophosphate-dependent phosphorylation of a specific serine residue in HPr, a phosphocarrier protein of the phosphoenolpyruvate-dependent sugar phosphotransferase system (PTS). HprK/P also catalyzes the pyrophosphate-producing, inorganic phosphate-dependent dephosphorylation (phosphorolysis) of seryl-phosphorylated HPr (P-Ser-HPr). The two antagonistic activities of HprK/P are regulated by several intracellular metabolites, which change their concentration in response to the absence or presence of rapidly metabolisable carbon sources (glucose, fructose, etc.) in the growth medium. Therefore, by controlling the phosphorylation state of HPr, HPrK/P is a sensor enzyme that plays a major role in the regulation of carbon metabolism and sugar transport: it mediates carbon catabolite repression (CCR), and regulates PTS-catalyzed carbohydrate uptake and inducer exclusion. The chain is HPr kinase/phosphorylase from Clostridium tetani (strain Massachusetts / E88).